The chain runs to 1562 residues: Phospholipid-transporting ATPase dnf1 (1562 aa).

4 disordered regions span residues 1 to 38 (MKSSGIAGDSNGFETNFLNETTNREEDGAFNWNAADDG), 55 to 94 (LPLGIDENELDEIDINGDSKKLDSVEVDESHDVNSPSDSR), 115 to 134 (TPSTKTEQTSKGKGKKKKAH), and 146 to 166 (PLDDIEPTSPREASPVFNGRP). Topologically, residues 1–275 (MKSSGIAGDS…IAIMQMIPGW (275 aa)) are extracellular. A compositionally biased stretch (polar residues) spans 12 to 21 (GFETNFLNET). Residues 60–69 (DENELDEIDI) are compositionally biased toward acidic residues. The segment covering 71-86 (GDSKKLDSVEVDESHD) has biased composition (basic and acidic residues). Residues 276 to 296 (STTGTYTTIIPLLIFISIAIL) form a helical membrane-spanning segment. Residues 297–574 (REGFDNYRRY…APSMQKVTNR (278 aa)) lie on the Cytoplasmic side of the membrane. Residues 347-406 (SQESASRSTIRSTDEREPERTSEDPPQLPPSPSSPSSPALSVKPNIDPQPPLYNSTLTTT) are disordered. Residues 358–369 (STDEREPERTSE) show a composition bias toward basic and acidic residues. Pro residues predominate over residues 372-381 (PQLPPSPSSP). A helical membrane pass occupies residues 575 to 595 (IVIFIFALVVSMAIYCTAAYF). At 596-614 (VWQKKVERKLWYLTNSKLS) the chain is on the extracellular side. A helical membrane pass occupies residues 615–635 (FVPILVSFIILYNTMVPISLY). Topologically, residues 636–1309 (VSMEIIRVFQ…YILGTFYKEQ (674 aa)) are cytoplasmic. The 4-aspartylphosphate intermediate role is filled by Asp-684. ATP contacts are provided by Asp-684, Lys-685, Thr-686, Glu-794, Phe-843, Ser-845, Lys-848, and Lys-866. Residue Asp-684 participates in Mg(2+) binding. Thr-686 provides a ligand contact to Mg(2+). Residue Ser-954 is modified to Phosphoserine. Residues Arg-1022, Thr-1023, Thr-1102, Gly-1103, Asp-1104, 1181–1188 (VIVIDGST), Arg-1216, and Lys-1222 contribute to the ATP site. A Mg(2+)-binding site is contributed by Asp-1243. Residues Asn-1246 and Asp-1247 each coordinate ATP. A helical transmembrane segment spans residues 1310–1330 (FFFLMQAIMQPFVGYTGQSLY). Topologically, residues 1331-1332 (ES) are extracellular. Residues 1333–1353 (WGLTCFNTLFSSLCVIGLGIF) form a helical membrane-spanning segment. Topologically, residues 1354-1381 (EKDLSASTVIAVPELYQKGINNEAFNWR) are cytoplasmic. The helical transmembrane segment at 1382 to 1402 (VYFGWCSIAFIQAFLVFYVTY) threads the bilayer. Residues 1403–1414 (SLFGMKELNDNN) are Extracellular-facing. Residues 1415–1435 (IFAYGQLIFTAAIFIMNFKLV) form a helical membrane-spanning segment. Residues 1436–1443 (FIEMQYIN) are Cytoplasmic-facing. The helical transmembrane segment at 1444–1464 (IISIIVLVLTSLAWFLFNIFI) threads the bilayer. At 1465–1490 (SEHYPDKNLYLARSQFLHHFGKNPSW) the chain is on the extracellular side. Residues 1491-1511 (WLTMLFVMVCALTIDIVAQML) form a helical membrane-spanning segment. Residues 1512–1562 (RRTLRPTDTDIFVEMENDAFVRSRFEQESGEFLQANAPSVDEIEQYLKSRD) are Cytoplasmic-facing.

It belongs to the cation transport ATPase (P-type) (TC 3.A.3) family. Type IV subfamily. Mg(2+) is required as a cofactor.

It is found in the golgi apparatus. Its subcellular location is the trans-Golgi network membrane. The protein resides in the endosome membrane. The catalysed reaction is ATP + H2O + phospholipidSide 1 = ADP + phosphate + phospholipidSide 2.. The enzyme catalyses a 1,2-diacyl-sn-glycero-3-phosphocholine(out) + ATP + H2O = a 1,2-diacyl-sn-glycero-3-phosphocholine(in) + ADP + phosphate + H(+). It carries out the reaction a 1,2-diacyl-sn-glycero-3-phosphoethanolamine(out) + ATP + H2O = a 1,2-diacyl-sn-glycero-3-phosphoethanolamine(in) + ADP + phosphate + H(+). Catalytic component of a P4-ATPase flippase complex which catalyzes the hydrolysis of ATP coupled to the transport of phosphatidylcholine and small amounts of phosphatidylethanolamine from the lumen to the cytosolic leaflet of the trans-Golgi network and ensures the maintenance of asymmetric distribution of phospholipids. May be involved in transport from early endosomes to the trans-Golgi network (TGN). The polypeptide is Phospholipid-transporting ATPase dnf1 (Schizosaccharomyces pombe (strain 972 / ATCC 24843) (Fission yeast)).